The sequence spans 715 residues: Tensin-4 (715 aa).

Residues 1-18 form the signal peptide; sequence MSQVMSSPLLAGGHAVSL. Phosphoserine is present on serine 82. Disordered regions lie at residues 159–183, 195–251, 291–364, and 376–435; these read RCHD…RSGG, RSSS…SPLV, SLLH…CPPS, and LING…ARDM. Residues 197-206 show a composition bias toward polar residues; that stretch reads SSESLIFSGN. Position 248 is a phosphoserine (serine 248). Residues 291-325 show a composition bias toward low complexity; that stretch reads SLLHSSNSSHQSSSRSLESPANSSSSLHSLGSVSL. Residues 449 to 556 form the SH2 domain; sequence WFKPNITREQ…ALPCKLTIPQ (108 aa). Positions 582 to 705 constitute a PTB domain; sequence CHTLYLSSVS…QPASQVIGLV (124 aa).

The protein belongs to the PTEN phosphatase protein family. As to quaternary structure, interacts (via SH2 domain) with Rho GTPase-activating protein DLC1 (via C-terminus); the interaction is independent of DLC1 tyrosine phosphorylation. Interacts with integrin ITGB1; the interaction displaces tensin TNS3 from the ITGB1 cytoplasmic tail and promotes ITGB1 stability. Interacts (via SH2 domain) with E3 ubiquitin-protein ligase CBL (phosphorylated on 'Tyr-774'); the interaction is enhanced in the presence of EGF and reduces interaction of CBL with EGFR. Interacts (via SH2 domain) with receptor tyrosine kinase MET (when phosphorylated); the interaction increases MET protein stability. Post-translationally, proteolytically cleaved by caspase-3 during apoptosis. In terms of tissue distribution, expressed at low levels in colon (at protein level). Expressed in prostate and placenta.

The protein localises to the cell junction. Its subcellular location is the focal adhesion. The protein resides in the cytoplasm. It is found in the cytoskeleton. Promotes EGF-induced cell migration by displacing tensin TNS3 from the cytoplasmic tail of integrin ITGB1 which results in dissociation of TNS3 from focal adhesions, disassembly of actin stress fibers and initiation of cell migration. Suppresses ligand-induced degradation of EGFR by reducing EGFR ubiquitination in the presence of EGF. Increases MET protein stability by inhibiting MET endocytosis and subsequent lysosomal degradation which leads to increased cell survival, proliferation and migration. The polypeptide is Tensin-4 (TNS4) (Homo sapiens (Human)).